Reading from the N-terminus, the 161-residue chain is Interleukin-17F (161 aa).

Positions 1–28 (MKGSCETTMVKSLLLLMLGFAIISSGAA) are cleaved as a signal peptide. The N-linked (GlcNAc...) asparagine glycan is linked to Asn-83. Disulfide bonds link Cys-100/Cys-150 and Cys-105/Cys-152.

This sequence belongs to the IL-17 family. As to quaternary structure, homodimer; disulfide-linked. Heterodimer with IL17A (IL17A-IL17F). Forms complexes with IL17RA and IL17RC receptors with 2:1 binding stoichiometry: two receptor chains for one interleukin molecule. IL17F homodimer forms predominantly complexes with IL17RC homodimer, whereas IL17A-IL17F favors complexes with IL17RA-IL17RC. IL17RA and IL17RC chains cannot distinguish between IL17A and IL17F molecules, potentially enabling the formation of topologically distinct complexes.

The protein localises to the secreted. Functionally, effector cytokine of innate and adaptive immune system involved in antimicrobial host defense and maintenance of tissue integrity. IL17A-IL17F signals via IL17RA-IL17RC heterodimeric receptor complex, triggering homotypic interaction of IL17RA and IL17RC chains with TRAF3IP2 adapter through SEFIR domains. This leads to downstream TRAF6-mediated activation of NF-kappa-B and MAPkinase pathways ultimately resulting in transcriptional activation of cytokines, chemokines, antimicrobial peptides and matrix metalloproteinases, with potential strong immune inflammation. IL17A-IL17F is primarily involved in host defense against extracellular bacteria and fungi by inducing neutrophilic inflammation. As signature effector cytokine of T-helper 17 cells (Th17), primarily induces neutrophil activation and recruitment at infection and inflammatory sites. Stimulates the production of antimicrobial beta-defensins DEFB1, DEFB103A, and DEFB104A by mucosal epithelial cells, limiting the entry of microbes through the epithelial barriers. IL17F homodimer can signal via IL17RC homodimeric receptor complex, triggering downstream activation of TRAF6 and NF-kappa-B signaling pathway. Via IL17RC induces transcriptional activation of IL33, a potent cytokine that stimulates group 2 innate lymphoid cells and adaptive T-helper 2 cells involved in pulmonary allergic response to fungi. Likely via IL17RC, promotes sympathetic innervation of peripheral organs by coordinating the communication between gamma-delta T cells and parenchymal cells. Stimulates sympathetic innervation of thermogenic adipose tissue by driving TGFB1 expression. Regulates the composition of intestinal microbiota and immune tolerance by inducing antimicrobial proteins that specifically control the growth of commensal Firmicutes and Bacteroidetes. This Rattus norvegicus (Rat) protein is Interleukin-17F (Il17f).